Consider the following 908-residue polypeptide: Translation initiation factor IF-2 (908 aa).

2 disordered regions span residues 52–229 (QSHG…AEEA) and 241–316 (AGQY…SAQH). Residues 65 to 84 (KSKTTSTARVTGSSGKSKSV) are compositionally biased toward polar residues. Composition is skewed to basic and acidic residues over residues 94–108 (FEKP…ELAA), 120–138 (AAKD…EERQ), 176–185 (IEVKPKEQPK), 193–229 (PKVE…AEEA), 270–280 (SFEKERREIKR), and 294–303 (KNQDEREIKN). The tr-type G domain occupies 409–578 (TRPPVVTIMG…SLQAELMELE (170 aa)). The tract at residues 418–425 (GHVDHGKT) is G1. A GTP-binding site is contributed by 418-425 (GHVDHGKT). The G2 stretch occupies residues 443 to 447 (GITQH). The tract at residues 464-467 (DTPG) is G3. GTP contacts are provided by residues 464-468 (DTPGH) and 518-521 (NKMD). The G4 stretch occupies residues 518 to 521 (NKMD). The interval 554-556 (SAK) is G5.

It belongs to the TRAFAC class translation factor GTPase superfamily. Classic translation factor GTPase family. IF-2 subfamily.

It localises to the cytoplasm. One of the essential components for the initiation of protein synthesis. Protects formylmethionyl-tRNA from spontaneous hydrolysis and promotes its binding to the 30S ribosomal subunits. Also involved in the hydrolysis of GTP during the formation of the 70S ribosomal complex. The sequence is that of Translation initiation factor IF-2 from Psychrobacter arcticus (strain DSM 17307 / VKM B-2377 / 273-4).